Reading from the N-terminus, the 369-residue chain is MIALLIGAGVALLVALIGTPLFIRFLVAKSYGQFIRDDGPTSHHTKRGTPTMGGTVVVAAVLISYFVTHLIMWMMNPDSAGPSASGLLLLFLMVGMGFVGFLDDFIKISNKRSLGLNARAKLILQAAVGIIFAVLVLQFPNEDGLRPASTQISLVRDIPWLDLAFGGTVVGAILFVLWSNLIITAATNGVNLTDGLDGLAAGASIMVFGAYTIMGIWQNNQACGSPREAGSGCYQVRDPMDLALLAAILSAALVGFLWWNTSPAKIFMGDTGSLAIGGAVAAFAILSRTELLLAFIGGLFVLITLSVIIQVGFFKLSGGKRVFKMAPLQHHFELKGWDEVTVVVRFWILAGLFVAAGLGIFYAEWVVLL.

The next 10 helical transmembrane spans lie at 2–22, 55–75, 86–106, 120–140, 163–183, 196–216, 239–259, 266–286, 291–311, and 348–368; these read IALLIGAGVALLVALIGTPLF, TVVVAAVLISYFVTHLIMWMM, GLLLLFLMVGMGFVGFLDDFI, AKLILQAAVGIIFAVLVLQFP, LAFGGTVVGAILFVLWSNLII, LDGLAAGASIMVFGAYTIMGI, PMDLALLAAILSAALVGFLWW, IFMGDTGSLAIGGAVAAFAIL, LLLAFIGGLFVLITLSVIIQV, and ILAGLFVAAGLGIFYAEWVVL.

This sequence belongs to the glycosyltransferase 4 family. MraY subfamily. Mg(2+) serves as cofactor.

Its subcellular location is the cell membrane. It catalyses the reaction UDP-N-acetyl-alpha-D-muramoyl-L-alanyl-gamma-D-glutamyl-meso-2,6-diaminopimeloyl-D-alanyl-D-alanine + di-trans,octa-cis-undecaprenyl phosphate = di-trans,octa-cis-undecaprenyl diphospho-N-acetyl-alpha-D-muramoyl-L-alanyl-D-glutamyl-meso-2,6-diaminopimeloyl-D-alanyl-D-alanine + UMP. The protein operates within cell wall biogenesis; peptidoglycan biosynthesis. Functionally, catalyzes the initial step of the lipid cycle reactions in the biosynthesis of the cell wall peptidoglycan: transfers peptidoglycan precursor phospho-MurNAc-pentapeptide from UDP-MurNAc-pentapeptide onto the lipid carrier undecaprenyl phosphate, yielding undecaprenyl-pyrophosphoryl-MurNAc-pentapeptide, known as lipid I. This chain is Phospho-N-acetylmuramoyl-pentapeptide-transferase, found in Paenarthrobacter aurescens (strain TC1).